The chain runs to 308 residues: Methionyl-tRNA formyltransferase (308 aa).

Residue 111-114 participates in (6S)-5,6,7,8-tetrahydrofolate binding; it reads SLLP.

It belongs to the Fmt family.

It catalyses the reaction L-methionyl-tRNA(fMet) + (6R)-10-formyltetrahydrofolate = N-formyl-L-methionyl-tRNA(fMet) + (6S)-5,6,7,8-tetrahydrofolate + H(+). Functionally, attaches a formyl group to the free amino group of methionyl-tRNA(fMet). The formyl group appears to play a dual role in the initiator identity of N-formylmethionyl-tRNA by promoting its recognition by IF2 and preventing the misappropriation of this tRNA by the elongation apparatus. The protein is Methionyl-tRNA formyltransferase of Thermodesulfovibrio yellowstonii (strain ATCC 51303 / DSM 11347 / YP87).